Consider the following 62-residue polypeptide: UPF0291 protein CLM_2971 (62 aa).

The protein belongs to the UPF0291 family.

It localises to the cytoplasm. In Clostridium botulinum (strain Kyoto / Type A2), this protein is UPF0291 protein CLM_2971.